A 478-amino-acid chain; its full sequence is Protein nucleotidyltransferase YdiU (478 aa).

Residues Gly-74, Gly-76, Arg-77, Lys-97, Asp-109, Gly-110, Arg-160, and Arg-167 each contribute to the ATP site. Catalysis depends on Asp-236, which acts as the Proton acceptor. Residues Asn-237 and Asp-246 each coordinate Mg(2+). Asp-246 contributes to the ATP binding site.

Belongs to the SELO family. It depends on Mg(2+) as a cofactor. The cofactor is Mn(2+).

The enzyme catalyses L-seryl-[protein] + ATP = 3-O-(5'-adenylyl)-L-seryl-[protein] + diphosphate. It carries out the reaction L-threonyl-[protein] + ATP = 3-O-(5'-adenylyl)-L-threonyl-[protein] + diphosphate. The catalysed reaction is L-tyrosyl-[protein] + ATP = O-(5'-adenylyl)-L-tyrosyl-[protein] + diphosphate. It catalyses the reaction L-histidyl-[protein] + UTP = N(tele)-(5'-uridylyl)-L-histidyl-[protein] + diphosphate. The enzyme catalyses L-seryl-[protein] + UTP = O-(5'-uridylyl)-L-seryl-[protein] + diphosphate. It carries out the reaction L-tyrosyl-[protein] + UTP = O-(5'-uridylyl)-L-tyrosyl-[protein] + diphosphate. In terms of biological role, nucleotidyltransferase involved in the post-translational modification of proteins. It can catalyze the addition of adenosine monophosphate (AMP) or uridine monophosphate (UMP) to a protein, resulting in modifications known as AMPylation and UMPylation. This chain is Protein nucleotidyltransferase YdiU, found in Chromobacterium violaceum (strain ATCC 12472 / DSM 30191 / JCM 1249 / CCUG 213 / NBRC 12614 / NCIMB 9131 / NCTC 9757 / MK).